The sequence spans 548 residues: Solute carrier family 22 member 7 (548 aa).

A run of 12 helical transmembrane segments spans residues 21–41 (VALL…PIFL), 146–166 (AAST…GYLS), 180–200 (VSTL…MFAI), 204–224 (LTGS…LEWL), 234–254 (VLSS…GYLI), 259–279 (WLLL…WWVP), 346–366 (ISLC…GLSL), 376–397 (YQTQ…YLSV), 404–423 (LTQA…RLLV), 432–452 (TVLA…AYLF), 466–486 (MGLT…AALL), and 493–513 (LPKL…LLLP). Residues 522-548 (ETIQDVERKSAPTSLQEEEMPMKQVQN) form a disordered region.

This sequence belongs to the major facilitator (TC 2.A.1) superfamily. Organic cation transporter (TC 2.A.1.19) family.

It is found in the basolateral cell membrane. Its subcellular location is the apical cell membrane. The protein resides in the cell membrane. The catalysed reaction is orotate(out) + L-glutamate(in) = orotate(in) + L-glutamate(out). It catalyses the reaction 3',5'-cyclic GMP(in) = 3',5'-cyclic GMP(out). The enzyme catalyses GMP(in) = GMP(out). It carries out the reaction 2'-deoxyguanosine(in) = 2'-deoxyguanosine(out). The catalysed reaction is GDP(in) = GDP(out). It catalyses the reaction guanosine(in) = guanosine(out). The enzyme catalyses GTP(in) = GTP(out). It carries out the reaction 3',5'-cyclic AMP(in) = 3',5'-cyclic AMP(out). The catalysed reaction is creatinine(in) = creatinine(out). It catalyses the reaction prostaglandin E2(out) = prostaglandin E2(in). The enzyme catalyses 2-oxoglutarate(in) = 2-oxoglutarate(out). It carries out the reaction glutarate(in) = glutarate(out). The catalysed reaction is urate(out) = urate(in). It catalyses the reaction estrone 3-sulfate(out) = estrone 3-sulfate(in). Functions as a Na(+)-independent bidirectional multispecific transporter. Contributes to the renal and hepatic elimination of endogenous organic compounds from the systemic circulation into the urine and bile, respectively. Capable of transporting a wide range of purine and pyrimidine nucleobases, nucleosides and nucleotides, with cGMP, 2'deoxyguanosine and GMP being the preferred substrates. Functions as a pH- and chloride-independent cGMP bidirectional facilitative transporter that can regulate both intracellular and extracellular levels of cGMP and may be involved in cGMP signaling pathways. Mediates orotate/glutamate bidirectional exchange and most likely display a physiological role in hepatic release of glutamate into the blood. Involved in renal secretion and possible reabsorption of creatinine. Able to uptake prostaglandin E2 (PGE2) and may contribute to PGE2 renal excretion. Also transports alpha-ketoglutarate and urate. Apart from the orotate/glutamate exchange, the counterions for the uptake of other SLC22A7/OAT2 substrates remain to be identified. This Pongo abelii (Sumatran orangutan) protein is Solute carrier family 22 member 7 (SLC22A7).